Reading from the N-terminus, the 260-residue chain is HTH-type transcriptional activator FapR (260 aa).

Residues E154–G251 enclose the HTH araC/xylS-type domain. 2 DNA-binding regions (H-T-H motif) span residues S171 to C192 and I218 to Y241.

As to quaternary structure, homodimer.

Its function is as follows. Positive regulator of the expression of the 987P operon for the fimbrial protein in enterotoxigenic E.coli. This Escherichia coli protein is HTH-type transcriptional activator FapR.